The chain runs to 104 residues: Large ribosomal subunit protein uL24 (104 aa).

The protein belongs to the universal ribosomal protein uL24 family. In terms of assembly, part of the 50S ribosomal subunit.

In terms of biological role, one of two assembly initiator proteins, it binds directly to the 5'-end of the 23S rRNA, where it nucleates assembly of the 50S subunit. One of the proteins that surrounds the polypeptide exit tunnel on the outside of the subunit. This is Large ribosomal subunit protein uL24 from Clostridium perfringens (strain ATCC 13124 / DSM 756 / JCM 1290 / NCIMB 6125 / NCTC 8237 / Type A).